Consider the following 538-residue polypeptide: Phosphoenolpyruvate carboxykinase (ATP) (538 aa).

A substrate-binding site is contributed by arginine 64. Residues asparagine 149 and phenylalanine 151 each coordinate Ca(2+). Residues tyrosine 206 and lysine 212 each coordinate substrate. ATP is bound by residues lysine 212, histidine 231, and 247–255; that span reads GLSGTGKTT. Residues lysine 212 and histidine 231 each contribute to the Mn(2+) site. Aspartate 268 lines the Mn(2+) pocket. ATP is bound by residues glutamate 296, arginine 332, 447–448, and threonine 453; that span reads RI. Arginine 332 contacts substrate.

It belongs to the phosphoenolpyruvate carboxykinase (ATP) family. Monomer. Mn(2+) is required as a cofactor.

It is found in the cytoplasm. The enzyme catalyses oxaloacetate + ATP = phosphoenolpyruvate + ADP + CO2. It functions in the pathway carbohydrate biosynthesis; gluconeogenesis. Allosterically activated by calcium. Its function is as follows. Involved in the gluconeogenesis. Catalyzes the conversion of oxaloacetate (OAA) to phosphoenolpyruvate (PEP) through direct phosphoryl transfer between the nucleoside triphosphate and OAA. In Salmonella typhimurium (strain LT2 / SGSC1412 / ATCC 700720), this protein is Phosphoenolpyruvate carboxykinase (ATP).